Reading from the N-terminus, the 149-residue chain is Large ribosomal subunit protein bL9 (149 aa).

This sequence belongs to the bacterial ribosomal protein bL9 family.

Its function is as follows. Binds to the 23S rRNA. This Anaeromyxobacter dehalogenans (strain 2CP-1 / ATCC BAA-258) protein is Large ribosomal subunit protein bL9.